The following is a 155-amino-acid chain: Endoribonuclease YbeY (155 aa).

Histidine 114, histidine 118, and histidine 124 together coordinate Zn(2+).

The protein belongs to the endoribonuclease YbeY family. Requires Zn(2+) as cofactor.

Its subcellular location is the cytoplasm. Functionally, single strand-specific metallo-endoribonuclease involved in late-stage 70S ribosome quality control and in maturation of the 3' terminus of the 16S rRNA. The chain is Endoribonuclease YbeY from Buchnera aphidicola subsp. Acyrthosiphon pisum (strain APS) (Acyrthosiphon pisum symbiotic bacterium).